The primary structure comprises 861 residues: Ataxin-7-like protein 1 (861 aa).

5 disordered regions span residues Met-1–Thr-31, Gly-154–Arg-189, Lys-342–Glu-448, Pro-606–Pro-673, and Phe-772–Pro-861. Residues Arg-284–Lys-351 enclose the SCA7 domain. Over residues Lys-342–Leu-354 the composition is skewed to basic and acidic residues. Over residues Leu-355–Ala-369 the composition is skewed to polar residues. Low complexity-rich tracts occupy residues Ser-372 to Gly-381, Ser-403 to Ser-417, and Pro-606 to His-616. Basic residues predominate over residues Lys-617–Ser-627. Over residues Lys-628–Ser-641 the composition is skewed to basic and acidic residues. 2 stretches are compositionally biased toward low complexity: residues Gln-648–Ser-671 and Ser-783–Lys-794. The span at Val-817–Asn-828 shows a compositional bias: polar residues. The segment covering Ser-829–Ser-847 has biased composition (low complexity).

In Homo sapiens (Human), this protein is Ataxin-7-like protein 1 (ATXN7L1).